A 150-amino-acid polypeptide reads, in one-letter code: UPF0178 protein PP_5221 (150 aa).

Belongs to the UPF0178 family.

The protein is UPF0178 protein PP_5221 of Pseudomonas putida (strain ATCC 47054 / DSM 6125 / CFBP 8728 / NCIMB 11950 / KT2440).